Here is a 941-residue protein sequence, read N- to C-terminus: Isoleucine--tRNA ligase (941 aa).

Positions 59–69 match the 'HIGH' region motif; it reads PYANGNIHIGH. Glu-562 serves as a coordination point for L-isoleucyl-5'-AMP. The 'KMSKS' region signature appears at 603–607; the sequence is KMSKS. Position 606 (Lys-606) interacts with ATP. Zn(2+) is bound by residues Cys-904, Cys-907, Cys-924, and Cys-927.

This sequence belongs to the class-I aminoacyl-tRNA synthetase family. IleS type 1 subfamily. As to quaternary structure, monomer. Zn(2+) is required as a cofactor.

The protein resides in the cytoplasm. The enzyme catalyses tRNA(Ile) + L-isoleucine + ATP = L-isoleucyl-tRNA(Ile) + AMP + diphosphate. Catalyzes the attachment of isoleucine to tRNA(Ile). As IleRS can inadvertently accommodate and process structurally similar amino acids such as valine, to avoid such errors it has two additional distinct tRNA(Ile)-dependent editing activities. One activity is designated as 'pretransfer' editing and involves the hydrolysis of activated Val-AMP. The other activity is designated 'posttransfer' editing and involves deacylation of mischarged Val-tRNA(Ile). This chain is Isoleucine--tRNA ligase, found in Haemophilus influenzae (strain 86-028NP).